The primary structure comprises 755 residues: Xaa-Pro dipeptidyl-peptidase (755 aa).

Residues serine 348, aspartate 468, and histidine 498 each act as charge relay system in the active site.

It belongs to the peptidase S15 family. Homodimer.

The protein localises to the cytoplasm. It carries out the reaction Hydrolyzes Xaa-Pro-|- bonds to release unblocked, N-terminal dipeptides from substrates including Ala-Pro-|-p-nitroanilide and (sequentially) Tyr-Pro-|-Phe-Pro-|-Gly-Pro-|-Ile.. In terms of biological role, removes N-terminal dipeptides sequentially from polypeptides having unsubstituted N-termini provided that the penultimate residue is proline. The polypeptide is Xaa-Pro dipeptidyl-peptidase (Streptococcus thermophilus (strain CNRZ 1066)).